The following is a 444-amino-acid chain: Tol-Pal system protein TolB (444 aa).

The N-terminal stretch at 1-19 (MRNIIYFILSLLFSVTSYA) is a signal peptide.

This sequence belongs to the TolB family. The Tol-Pal system is composed of five core proteins: the inner membrane proteins TolA, TolQ and TolR, the periplasmic protein TolB and the outer membrane protein Pal. They form a network linking the inner and outer membranes and the peptidoglycan layer.

Its subcellular location is the periplasm. Its function is as follows. Part of the Tol-Pal system, which plays a role in outer membrane invagination during cell division and is important for maintaining outer membrane integrity. The protein is Tol-Pal system protein TolB of Rickettsia rickettsii (strain Sheila Smith).